Here is a 269-residue protein sequence, read N- to C-terminus: Bifunctional protein FolD (269 aa).

NADP(+)-binding positions include 149 to 151 (GLG) and valine 215.

It belongs to the tetrahydrofolate dehydrogenase/cyclohydrolase family. Homodimer.

The enzyme catalyses (6R)-5,10-methylene-5,6,7,8-tetrahydrofolate + NADP(+) = (6R)-5,10-methenyltetrahydrofolate + NADPH. The catalysed reaction is (6R)-5,10-methenyltetrahydrofolate + H2O = (6R)-10-formyltetrahydrofolate + H(+). Its pathway is one-carbon metabolism; tetrahydrofolate interconversion. Catalyzes the oxidation of 5,10-methylenetetrahydrofolate to 5,10-methenyltetrahydrofolate and then the hydrolysis of 5,10-methenyltetrahydrofolate to 10-formyltetrahydrofolate. This chain is Bifunctional protein FolD, found in Mycoplasma pneumoniae (strain ATCC 29342 / M129 / Subtype 1) (Mycoplasmoides pneumoniae).